The following is a 347-amino-acid chain: NADH-ubiquinone oxidoreductase chain 2 (347 aa).

The next 11 helical transmembrane spans lie at 3–23 (PLIF…VMMS), 25–45 (HWLM…PLLM), 59–79 (YFLT…INLL), 96–116 (IIMT…FWVP), 122–144 (ISLS…VLYV), 149–171 (INLD…GGLN), 178–198 (ILAY…VFNP), 202–222 (LLNL…FMVA), 247–267 (IMLS…WMII), 276–296 (ITLA…YMRL), and 326–346 (LPVL…ITLL).

It belongs to the complex I subunit 2 family. As to quaternary structure, core subunit of respiratory chain NADH dehydrogenase (Complex I) which is composed of 45 different subunits. Interacts with TMEM242.

The protein resides in the mitochondrion inner membrane. The enzyme catalyses a ubiquinone + NADH + 5 H(+)(in) = a ubiquinol + NAD(+) + 4 H(+)(out). Functionally, core subunit of the mitochondrial membrane respiratory chain NADH dehydrogenase (Complex I) which catalyzes electron transfer from NADH through the respiratory chain, using ubiquinone as an electron acceptor. Essential for the catalytic activity and assembly of complex I. The sequence is that of NADH-ubiquinone oxidoreductase chain 2 from Saccopteryx bilineata (Greater white-lined bat).